A 157-amino-acid polypeptide reads, in one-letter code: Small ribosomal subunit protein uS7 (157 aa).

The protein belongs to the universal ribosomal protein uS7 family. As to quaternary structure, part of the 30S ribosomal subunit. Contacts proteins S9 and S11.

In terms of biological role, one of the primary rRNA binding proteins, it binds directly to 16S rRNA where it nucleates assembly of the head domain of the 30S subunit. Is located at the subunit interface close to the decoding center, probably blocks exit of the E-site tRNA. The chain is Small ribosomal subunit protein uS7 from Borrelia hermsii (strain HS1 / DAH).